The sequence spans 219 residues: MGQKVNPKGLRVGIIRDWEGRWFADKNYLELLHEDLKVRKFVKTKLQQAGVPKVEIERAANRVKVSIYAAKPGIVIGRGGTEVENLRKQLEAMTGKQVAVNIVEVKKPELDAQLVAESVAQQLEKRVSFRRAMKQTVQRTMRQGGQGIKISCSGRLGGAEIARTEWYSEGKVPLHTLRADIDYGFAEANTTYGKIGVKVWIYKGEVLPAKKVAQVEGGK.

The 69-residue stretch at 38 to 106 (VRKFVKTKLQ…QVAVNIVEVK (69 aa)) folds into the KH type-2 domain.

The protein belongs to the universal ribosomal protein uS3 family. In terms of assembly, part of the 30S ribosomal subunit. Forms a tight complex with proteins S10 and S14.

Binds the lower part of the 30S subunit head. Binds mRNA in the 70S ribosome, positioning it for translation. This Desulfitobacterium hafniense (strain DSM 10664 / DCB-2) protein is Small ribosomal subunit protein uS3.